The sequence spans 498 residues: Ribose import ATP-binding protein RbsA 1 (498 aa).

ABC transporter domains follow at residues 7–243 and 254–496; these read LHIQ…VGRR and PRGE…IGKS. 39-46 serves as a coordination point for ATP; that stretch reads GENGAGKS.

The protein belongs to the ABC transporter superfamily. Ribose importer (TC 3.A.1.2.1) family. In terms of assembly, the complex is composed of an ATP-binding protein (RbsA), two transmembrane proteins (RbsC) and a solute-binding protein (RbsB).

The protein localises to the cell inner membrane. The catalysed reaction is D-ribose(out) + ATP + H2O = D-ribose(in) + ADP + phosphate + H(+). Part of the ABC transporter complex RbsABC involved in ribose import. Responsible for energy coupling to the transport system. This is Ribose import ATP-binding protein RbsA 1 from Pasteurella multocida (strain Pm70).